We begin with the raw amino-acid sequence, 216 residues long: MSDDPETAERKMRFLFALRQRGVTDPRVLEAMERIDRGEFVRGHFEDRAYDDTPLPIPCGQTISQPSVVGLMTQALEVGPRDKVLEIGTGSGYQAAVLSLLCRRVYTIDRHRRLVAEAEALFRHLGLPNITALVGDGSRGLPEQAPFDRIMVTAAAEDPPGPLLAQLKIGGIMVVPVGQSDAVQTLIRVRRGENGFDYDELRQVRFVPLVEGLGQT.

S64 is an active-site residue.

Belongs to the methyltransferase superfamily. L-isoaspartyl/D-aspartyl protein methyltransferase family.

It is found in the cytoplasm. The catalysed reaction is [protein]-L-isoaspartate + S-adenosyl-L-methionine = [protein]-L-isoaspartate alpha-methyl ester + S-adenosyl-L-homocysteine. Catalyzes the methyl esterification of L-isoaspartyl residues in peptides and proteins that result from spontaneous decomposition of normal L-aspartyl and L-asparaginyl residues. It plays a role in the repair and/or degradation of damaged proteins. In Paracoccus denitrificans (strain Pd 1222), this protein is Protein-L-isoaspartate O-methyltransferase.